The sequence spans 506 residues: Aldehyde dehydrogenase (506 aa).

Residue 218–224 (GFGLEAG) participates in NAD(+) binding. Catalysis depends on residues Glu262 and Cys301.

This sequence belongs to the aldehyde dehydrogenase family.

The catalysed reaction is an aldehyde + NAD(+) + H2O = a carboxylate + NADH + 2 H(+). The sequence is that of Aldehyde dehydrogenase from Rhodospirillum rubrum (strain ATCC 11170 / ATH 1.1.1 / DSM 467 / LMG 4362 / NCIMB 8255 / S1).